A 407-amino-acid polypeptide reads, in one-letter code: Arginine deiminase (407 aa).

C397 serves as the catalytic Amidino-cysteine intermediate.

It belongs to the arginine deiminase family.

The protein resides in the cytoplasm. It catalyses the reaction L-arginine + H2O = L-citrulline + NH4(+). Its pathway is amino-acid degradation; L-arginine degradation via ADI pathway; carbamoyl phosphate from L-arginine: step 1/2. This chain is Arginine deiminase, found in Limosilactobacillus fermentum (strain NBRC 3956 / LMG 18251) (Lactobacillus fermentum).